A 139-amino-acid chain; its full sequence is Lamprin 0.9 (139 aa).

An N-terminal signal peptide occupies residues 1-19; sequence MAAAIQALLVLALLHLATA. A run of 8 repeats spans residues 42–46, 47–51, 52–56, 57–61, 62–66, 67–71, 92–96, and 106–110. The 8 X 5 AA approximate repeats stretch occupies residues 42-110; that stretch reads GGLGYGGLGY…YHHALGGLGY (69 aa).

As to quaternary structure, the polymeric lamprin chains self-aggregate to form fibers and have secondary structures particularly rich in beta-sheets and in beta-turns.

The protein resides in the secreted. Its subcellular location is the extracellular space. It localises to the extracellular matrix. Its function is as follows. Self-aggregating protein that is part of the soluble form of lamprin. This Petromyzon marinus (Sea lamprey) protein is Lamprin 0.9.